Consider the following 4513-residue polypeptide: Dynein-1-beta heavy chain, flagellar inner arm I1 complex (4513 aa).

Positions 1–1806 (MEPGDEGKGH…IVKQVLSVFY (1806 aa)) are stem. 3 coiled-coil regions span residues 192–223 (KAAA…NQQD), 1544–1577 (TAQG…RQQF), and 1704–1727 (THEC…LKKK). 4 AAA regions span residues 1807–2028 (YGYE…PIAR), 2089–2350 (RAIE…VPEN), 2458–2706 (FKPA…IIQG), and 2808–3059 (DYAL…LKRR). ATP contacts are provided by residues 1845–1852 (GPAGTGKT), 2127–2134 (GRTGSGKS), 2497–2504 (GNVGVGKT), and 2848–2855 (GVGGSGRK). 3 coiled-coil regions span residues 3107-3193 (AAMK…LTKK), 3301-3384 (KRAK…SISE), and 3499-3519 (RLKV…NAIQ). Positions 3107-3384 (AAMKKVAEEK…RVRWEASISE (278 aa)) are stalk. 2 AAA regions span residues 3443–3674 (LANP…EVNA) and 3890–4109 (ATTY…LLKS).

In terms of assembly, the I1 inner arm complex (also known as the f dynein complex) is a two-headed isoform composed of two heavy chains (1-alpha and 1-beta), three intermediate chains and three light chains. I1 occupies a specific position proximal to the first radial spoke and repeats every 96 nm along the length of the axoneme.

It localises to the cell projection. The protein resides in the cilium. The protein localises to the flagellum. Its subcellular location is the cytoplasm. It is found in the cytoskeleton. It localises to the flagellum axoneme. Its function is as follows. Force generating protein of eukaryotic cilia and flagella. Produces force towards the minus ends of microtubules. Dynein has ATPase activity; the force-producing power stroke is thought to occur on release of ADP. Required for assembly of the I1 inner arm complex and its targeting to the appropriate axoneme location. Also required for phototaxis. In Chlamydomonas reinhardtii (Chlamydomonas smithii), this protein is Dynein-1-beta heavy chain, flagellar inner arm I1 complex (DHC10).